A 274-amino-acid polypeptide reads, in one-letter code: Protein CIMAP1C (274 aa).

Residues 1 to 27 (MKLPKGTRSSVYFAQHPEKEPLPSRQE) are disordered. The segment covering 16-27 (HPEKEPLPSRQE) has biased composition (basic and acidic residues). STPGR repeat units follow at residues 199–224 (PGPT…MAKR) and 235–260 (PGPG…MGIK).

Belongs to the CIMAP family.

The sequence is that of Protein CIMAP1C from Homo sapiens (Human).